The chain runs to 306 residues: 26S proteasome regulatory subunit RPN11 (306 aa).

The MPN domain maps to 27–162; the sequence is VYISSIALLK…IDAFRLIDTG (136 aa). Zn(2+) is bound by residues H109, H111, and D122. Positions 109 to 122 match the JAMM motif motif; the sequence is HSHPGFGCWLSSVD.

The protein belongs to the peptidase M67A family.

Its function is as follows. Acts as a regulatory subunit of the 26 proteasome which is involved in the ATP-dependent degradation of ubiquitinated proteins. This is 26S proteasome regulatory subunit RPN11 (RPN11) from Candida glabrata (strain ATCC 2001 / BCRC 20586 / JCM 3761 / NBRC 0622 / NRRL Y-65 / CBS 138) (Yeast).